Here is a 434-residue protein sequence, read N- to C-terminus: Enolase (434 aa).

Residue Q163 participates in (2R)-2-phosphoglycerate binding. E205 (proton donor) is an active-site residue. Positions 242, 291, and 318 each coordinate Mg(2+). (2R)-2-phosphoglycerate-binding residues include K343, R372, S373, and K394. K343 (proton acceptor) is an active-site residue.

It belongs to the enolase family. Mg(2+) serves as cofactor.

It localises to the cytoplasm. The protein resides in the secreted. Its subcellular location is the cell surface. The enzyme catalyses (2R)-2-phosphoglycerate = phosphoenolpyruvate + H2O. The protein operates within carbohydrate degradation; glycolysis; pyruvate from D-glyceraldehyde 3-phosphate: step 4/5. Functionally, catalyzes the reversible conversion of 2-phosphoglycerate (2-PG) into phosphoenolpyruvate (PEP). It is essential for the degradation of carbohydrates via glycolysis. This is Enolase from Streptococcus thermophilus (strain CNRZ 1066).